The chain runs to 211 residues: SAGA-associated factor 11 homolog 1 (211 aa).

An SGF11-type zinc finger spans residues 115 to 136 (CTCPNCDRLVAAARFAPHLEKC). Positions 149–211 (RRLATKEGSS…GSKKNNGKTF (63 aa)) are disordered. Over residues 157 to 166 (SSASTSSTST) the composition is skewed to low complexity. Phosphoserine is present on serine 187. Low complexity predominate over residues 197-211 (SSRNNGSKKNNGKTF).

This sequence belongs to the SGF11 family. As to quaternary structure, component of some SAGA transcription coactivator-HAT complexes, at least composed of Ada2b, not/nonstop, Pcaf/Gcn5, Sgf11 and Spt3. Within the SAGA complex, Sgf11, e(y)2, and not/nonstop form an additional subcomplex of SAGA called the DUB module (deubiquitination module). Interacts directly with not/nonstop. Interacts with the AMEX complex component xmas-2. Interacts with Cbp80; important for promoter recruitment of Sgf11 that is not associated with the DUB module.

The protein localises to the nucleus. The protein resides in the nucleoplasm. Its subcellular location is the cytoplasm. Component of the transcription regulatory histone acetylation (HAT) complex SAGA, a multiprotein complex that activates transcription by remodeling chromatin and mediating histone acetylation and deubiquitination. Within the SAGA complex, participates in a subcomplex that specifically deubiquitinates histone H2B. The SAGA complex is recruited to specific gene promoters by activators, where it is required for transcription. Required for nuclear receptor-mediated transactivation. Binds independently on SAGA to promoters in an RNA-dependent manner. Binds to mRNA and is essential for total mRNA export from the nucleus. Required to counteract heterochromatin silencing. Controls the development of neuronal connectivity in visual system by being required for accurate axon targeting in the optic lobe. Required for expression of ecdysone-induced genes such as br/broad. This Drosophila grimshawi (Hawaiian fruit fly) protein is SAGA-associated factor 11 homolog 1.